We begin with the raw amino-acid sequence, 225 residues long: Uridylate kinase (225 aa).

An ATP-binding site is contributed by 9–10 (GS). Position 44 (glycine 44) interacts with UMP. 2 residues coordinate ATP: glycine 45 and arginine 49. Residues aspartate 66 and 114 to 120 (THPGHTT) contribute to the UMP site. ATP contacts are provided by threonine 140, asparagine 141, tyrosine 146, and aspartate 149.

It belongs to the UMP kinase family. In terms of assembly, homohexamer.

It localises to the cytoplasm. The enzyme catalyses UMP + ATP = UDP + ADP. The protein operates within pyrimidine metabolism; CTP biosynthesis via de novo pathway; UDP from UMP (UMPK route): step 1/1. Its activity is regulated as follows. Inhibited by UTP. Its function is as follows. Catalyzes the reversible phosphorylation of UMP to UDP. This Thermococcus gammatolerans (strain DSM 15229 / JCM 11827 / EJ3) protein is Uridylate kinase.